The sequence spans 148 residues: MSKPHLLIVEARFYDDMADALLEGAKFALEEAGATYDVITVPGALEIPAAIAMALDGADNDGTEYDGFVALGMVIRGETYHFDIVSNESSRALMDLAVSESLPIGNGILTVENDEQAWARVRRSDKDKGGFAARAALTMIELKKKLGG.

Residues F13, 44-46 (ALE), and 73-75 (MVI) contribute to the 5-amino-6-(D-ribitylamino)uracil site. Residue 78–79 (ET) coordinates (2S)-2-hydroxy-3-oxobutyl phosphate. The active-site Proton donor is the H81. N106 provides a ligand contact to 5-amino-6-(D-ribitylamino)uracil. A (2S)-2-hydroxy-3-oxobutyl phosphate-binding site is contributed by R120.

Belongs to the DMRL synthase family.

It catalyses the reaction (2S)-2-hydroxy-3-oxobutyl phosphate + 5-amino-6-(D-ribitylamino)uracil = 6,7-dimethyl-8-(1-D-ribityl)lumazine + phosphate + 2 H2O + H(+). It participates in cofactor biosynthesis; riboflavin biosynthesis; riboflavin from 2-hydroxy-3-oxobutyl phosphate and 5-amino-6-(D-ribitylamino)uracil: step 1/2. Catalyzes the formation of 6,7-dimethyl-8-ribityllumazine by condensation of 5-amino-6-(D-ribitylamino)uracil with 3,4-dihydroxy-2-butanone 4-phosphate. This is the penultimate step in the biosynthesis of riboflavin. This chain is 6,7-dimethyl-8-ribityllumazine synthase, found in Agrobacterium fabrum (strain C58 / ATCC 33970) (Agrobacterium tumefaciens (strain C58)).